A 255-amino-acid chain; its full sequence is Endonuclease 8 2 (255 aa).

The active-site Schiff-base intermediate with DNA is Pro2. The active-site Proton donor is Glu3. Lys51 functions as the Proton donor; for beta-elimination activity in the catalytic mechanism. DNA-binding residues include Gln67 and Asn164. The FPG-type zinc-finger motif lies at 221–255 (WVYGRAGQGCRRCGTLIAYDTTDERVRYWCPACQR). The active-site Proton donor; for delta-elimination activity is Arg245.

It belongs to the FPG family. It depends on Zn(2+) as a cofactor.

The catalysed reaction is 2'-deoxyribonucleotide-(2'-deoxyribose 5'-phosphate)-2'-deoxyribonucleotide-DNA = a 3'-end 2'-deoxyribonucleotide-(2,3-dehydro-2,3-deoxyribose 5'-phosphate)-DNA + a 5'-end 5'-phospho-2'-deoxyribonucleoside-DNA + H(+). Involved in base excision repair of DNA damaged by oxidation or by mutagenic agents. Acts as a DNA glycosylase that recognizes and removes damaged bases. Has AP (apurinic/apyrimidinic) lyase activity and introduces nicks in the DNA strand. Cleaves the DNA backbone by beta-delta elimination to generate a single-strand break at the site of the removed base with both 3'- and 5'-phosphates. This Mycobacterium bovis (strain ATCC BAA-935 / AF2122/97) protein is Endonuclease 8 2 (nei2).